The following is a 330-amino-acid chain: tRNA-modifying protein YgfZ (330 aa).

Residues Trp28 and Trp190 each coordinate folate.

Belongs to the tRNA-modifying YgfZ family.

The protein localises to the cytoplasm. In terms of biological role, folate-binding protein involved in regulating the level of ATP-DnaA and in the modification of some tRNAs. It is probably a key factor in regulatory networks that act via tRNA modification, such as initiation of chromosomal replication. This chain is tRNA-modifying protein YgfZ, found in Serratia proteamaculans (strain 568).